The chain runs to 176 residues: Ferritin heavy polypeptide-like 17E (176 aa).

The Ferritin-like diiron domain occupies 10-159 (QNYDWQCEDA…GYLTNLRQMG (150 aa)). 3 residues coordinate Fe cation: cysteine 27, glutamate 107, and glutamine 141.

It belongs to the ferritin family. In terms of tissue distribution, expressed in the testes and spermatogonia.

The polypeptide is Ferritin heavy polypeptide-like 17E (Mus musculus (Mouse)).